Reading from the N-terminus, the 506-residue chain is ATP synthase subunit alpha (506 aa).

170–177 lines the ATP pocket; sequence GDRQTGKT.

It belongs to the ATPase alpha/beta chains family. As to quaternary structure, F-type ATPases have 2 components, CF(1) - the catalytic core - and CF(0) - the membrane proton channel. CF(1) has five subunits: alpha(3), beta(3), gamma(1), delta(1), epsilon(1). CF(0) has four main subunits: a(1), b(1), b'(1) and c(9-12).

Its subcellular location is the cellular thylakoid membrane. The enzyme catalyses ATP + H2O + 4 H(+)(in) = ADP + phosphate + 5 H(+)(out). Produces ATP from ADP in the presence of a proton gradient across the membrane. The alpha chain is a regulatory subunit. In Synechococcus sp. (strain WH7803), this protein is ATP synthase subunit alpha.